The sequence spans 192 residues: Probable protein adenylyltransferase y4lH (192 aa).

The region spanning 52 to 190 (LDFAHYRALH…LAPLAAEIRR (139 aa)) is the Fido domain. ATP is bound by residues 82 to 83 (KG) and 139 to 141 (GNG).

It belongs to the fic family.

The enzyme catalyses L-tyrosyl-[protein] + ATP = O-(5'-adenylyl)-L-tyrosyl-[protein] + diphosphate. The catalysed reaction is L-threonyl-[protein] + ATP = 3-O-(5'-adenylyl)-L-threonyl-[protein] + diphosphate. In terms of biological role, probable adenylyltransferase that mediates the addition of adenosine 5'-monophosphate (AMP) to specific residues of target proteins. This is Probable protein adenylyltransferase y4lH from Sinorhizobium fredii (strain NBRC 101917 / NGR234).